We begin with the raw amino-acid sequence, 690 residues long: Glycine--tRNA ligase beta subunit (690 aa).

It belongs to the class-II aminoacyl-tRNA synthetase family. As to quaternary structure, tetramer of two alpha and two beta subunits.

The protein resides in the cytoplasm. The catalysed reaction is tRNA(Gly) + glycine + ATP = glycyl-tRNA(Gly) + AMP + diphosphate. This chain is Glycine--tRNA ligase beta subunit, found in Buchnera aphidicola subsp. Acyrthosiphon pisum (strain 5A).